We begin with the raw amino-acid sequence, 712 residues long: Polyribonucleotide nucleotidyltransferase (712 aa).

Mg(2+)-binding residues include Asp485 and Asp491. In terms of domain architecture, KH spans 552 to 611 (PKITTISVPKEKIRDVIGQGGKVIREIVEYSGAKIDINDDGTIMIAASSEDQATRAIERI). An S1 motif domain is found at 621–689 (GAIYTGKVVK…DRGKVKLSMR (69 aa)).

Belongs to the polyribonucleotide nucleotidyltransferase family. The cofactor is Mg(2+).

It localises to the cytoplasm. The catalysed reaction is RNA(n+1) + phosphate = RNA(n) + a ribonucleoside 5'-diphosphate. Functionally, involved in mRNA degradation. Catalyzes the phosphorolysis of single-stranded polyribonucleotides processively in the 3'- to 5'-direction. In Gluconacetobacter diazotrophicus (strain ATCC 49037 / DSM 5601 / CCUG 37298 / CIP 103539 / LMG 7603 / PAl5), this protein is Polyribonucleotide nucleotidyltransferase.